The primary structure comprises 321 residues: Geranylgeranyl transferase type-2 subunit beta 1 (321 aa).

Position 2 is an N-acetylserine (Ser2). PFTB repeat units lie at residues 14 to 55 (ADKH…DLLD), 62 to 103 (EEEV…ALFD), 110 to 151 (IGKV…SILK), 158 to 199 (VEKA…AITG), 206 to 247 (KDSL…IMID), and 254 to 296 (KAKL…SLLE). Geranylgeranyl diphosphate-binding positions include 184-186 (HAG) and 226-229 (RPEK). Zn(2+) is bound by residues Asp232 and Cys234. A geranylgeranyl diphosphate-binding site is contributed by 235 to 238 (YSWW). His284 is a Zn(2+) binding site.

It belongs to the protein prenyltransferase subunit beta family. In terms of assembly, heterotrimer composed of the alpha subunit RGTA, the beta subunit RGTB and REP; within this trimer, RGTA and RGTB form the catalytic component, while REP mediates peptide substrate binding. Zn(2+) serves as cofactor. Requires Mg(2+) as cofactor.

The enzyme catalyses geranylgeranyl diphosphate + L-cysteinyl-[protein] = S-geranylgeranyl-L-cysteinyl-[protein] + diphosphate. The enzymatic reaction requires the aid of the Rab escort protein REP. Its function is as follows. Catalyzes the transfer of a geranylgeranyl moiety from geranylgeranyl diphosphate to both cysteines of Rab proteins with the C-terminal sequence -CCXX, CXXX, -XCCX and -XCXC, such as RABA1A, RABA2A, RABF2A and RABG2. Involved in the geranylgeranylation of RABA2A. In vitro, can prenylate PGGTI targets with the C-terminal sequence Cys-aliphatic-aliphatic-X (CaaX) with leucine in the terminal position. Substrates with the C-terminal sequence -CSIL such as ARAC11/ROP1 or GG2/AGG2 are prenylated independently of REP and when the beta subunit is associated with the alpha subunit RGTA1. Functionally, required for male fertility and root tip growth. The sequence is that of Geranylgeranyl transferase type-2 subunit beta 1 from Arabidopsis thaliana (Mouse-ear cress).